The primary structure comprises 398 residues: 1-deoxy-D-xylulose 5-phosphate reductoisomerase (398 aa).

NADPH-binding residues include Thr-10, Gly-11, Ser-12, Ile-13, Gly-36, Lys-37, Asn-38, and Asn-124. Lys-125 serves as a coordination point for 1-deoxy-D-xylulose 5-phosphate. Residue Glu-126 participates in NADPH binding. Position 150 (Asp-150) interacts with Mn(2+). Residues Ser-151, Glu-152, Ser-186, and His-209 each contribute to the 1-deoxy-D-xylulose 5-phosphate site. Glu-152 is a binding site for Mn(2+). Gly-215 contributes to the NADPH binding site. Ser-222, Asn-227, Lys-228, and Glu-231 together coordinate 1-deoxy-D-xylulose 5-phosphate. Glu-231 provides a ligand contact to Mn(2+).

This sequence belongs to the DXR family. In terms of assembly, homodimer. Mg(2+) is required as a cofactor. The cofactor is Mn(2+).

It catalyses the reaction 2-C-methyl-D-erythritol 4-phosphate + NADP(+) = 1-deoxy-D-xylulose 5-phosphate + NADPH + H(+). It participates in isoprenoid biosynthesis; isopentenyl diphosphate biosynthesis via DXP pathway; isopentenyl diphosphate from 1-deoxy-D-xylulose 5-phosphate: step 1/6. Its function is as follows. Catalyzes the NADPH-dependent rearrangement and reduction of 1-deoxy-D-xylulose-5-phosphate (DXP) to 2-C-methyl-D-erythritol 4-phosphate (MEP). The protein is 1-deoxy-D-xylulose 5-phosphate reductoisomerase of Salmonella choleraesuis (strain SC-B67).